The sequence spans 209 residues: MKELVQQLRKDTGAGVMDCKKALQEANGDVVQALNLLKKKGLAKAEQKRTRSTTNGRVESYVHAGNRLGVLLELNCETDFVAKSEPFQLLAKNLAMQIAACEQVRYIEWEQIPSSVIESVKSQVAEQLVEQLANKPVQLRSQIVEAKVKKQLQKQCLLDQPFIKDEQLTVDEVIRTTIAQVGENIRLKRFARFVLGEETGEETGEETND.

The protein belongs to the EF-Ts family.

The protein localises to the plastid. It is found in the chloroplast. Its function is as follows. Associates with the EF-Tu.GDP complex and induces the exchange of GDP to GTP. It remains bound to the aminoacyl-tRNA.EF-Tu.GTP complex up to the GTP hydrolysis stage on the ribosome. The protein is Elongation factor Ts, chloroplastic (tsf) of Cyanidioschyzon merolae (strain NIES-3377 / 10D) (Unicellular red alga).